The primary structure comprises 358 residues: Ion-translocating oxidoreductase complex subunit D (358 aa).

The next 7 helical transmembrane spans lie at Val16–Trp36, Phe38–Val58, Ile68–Pro90, Ala128–Leu148, Phe206–Leu226, Ile236–Pro256, and Pro286–Ile306.

The protein belongs to the NqrB/RnfD family. The complex is composed of six subunits: RnfA, RnfB, RnfC, RnfD, RnfE and RnfG. Requires FMN as cofactor.

Its subcellular location is the cellular chromatophore membrane. Part of a membrane-bound complex that couples electron transfer with translocation of ions across the membrane. Required for nitrogen fixation. Involved in electron transfer to nitrogenase. This chain is Ion-translocating oxidoreductase complex subunit D, found in Rhodobacter capsulatus (Rhodopseudomonas capsulata).